Consider the following 222-residue polypeptide: Peptide methionine sulfoxide reductase MsrA (222 aa).

Residue Cys-60 is part of the active site.

The protein belongs to the MsrA Met sulfoxide reductase family.

The catalysed reaction is L-methionyl-[protein] + [thioredoxin]-disulfide + H2O = L-methionyl-(S)-S-oxide-[protein] + [thioredoxin]-dithiol. The enzyme catalyses [thioredoxin]-disulfide + L-methionine + H2O = L-methionine (S)-S-oxide + [thioredoxin]-dithiol. Its function is as follows. Has an important function as a repair enzyme for proteins that have been inactivated by oxidation. Catalyzes the reversible oxidation-reduction of methionine sulfoxide in proteins to methionine. This Pseudomonas putida (strain W619) protein is Peptide methionine sulfoxide reductase MsrA.